The primary structure comprises 471 residues: UDP-N-acetylmuramoylalanine--D-glutamate ligase (471 aa).

120–126 serves as a coordination point for ATP; that stretch reads GSNGKTT.

It belongs to the MurCDEF family.

Its subcellular location is the cytoplasm. The enzyme catalyses UDP-N-acetyl-alpha-D-muramoyl-L-alanine + D-glutamate + ATP = UDP-N-acetyl-alpha-D-muramoyl-L-alanyl-D-glutamate + ADP + phosphate + H(+). Its pathway is cell wall biogenesis; peptidoglycan biosynthesis. Cell wall formation. Catalyzes the addition of glutamate to the nucleotide precursor UDP-N-acetylmuramoyl-L-alanine (UMA). This Nitrosomonas europaea (strain ATCC 19718 / CIP 103999 / KCTC 2705 / NBRC 14298) protein is UDP-N-acetylmuramoylalanine--D-glutamate ligase.